Here is a 425-residue protein sequence, read N- to C-terminus: Histidine--tRNA ligase 1 (425 aa).

It belongs to the class-II aminoacyl-tRNA synthetase family. In terms of assembly, homodimer.

It localises to the cytoplasm. It carries out the reaction tRNA(His) + L-histidine + ATP = L-histidyl-tRNA(His) + AMP + diphosphate + H(+). This is Histidine--tRNA ligase 1 from Bacillus cereus (strain ZK / E33L).